Reading from the N-terminus, the 214-residue chain is Thymidylate kinase (214 aa).

15–22 (GLEGAGKT) serves as a coordination point for ATP.

The protein belongs to the thymidylate kinase family.

The catalysed reaction is dTMP + ATP = dTDP + ADP. Functionally, phosphorylation of dTMP to form dTDP in both de novo and salvage pathways of dTTP synthesis. This chain is Thymidylate kinase, found in Haemophilus ducreyi (strain 35000HP / ATCC 700724).